The sequence spans 54 residues: Ductus ejaculatorius peptide 99B (54 aa).

The N-terminal stretch at M1–S21 is a signal peptide. Q22 is subject to Pyrrolidone carboxylic acid. A glycan (N-linked (GlcNAc...) asparagine) is linked at N25. C40 and C52 are oxidised to a cystine. A propeptide spanning residues R53–K54 is cleaved from the precursor.

The protein to paragonial peptide B. In terms of tissue distribution, ductus ejaculatorius.

The protein localises to the secreted. Induces post-mating responses; increased oviposition and reduced receptivity. This Drosophila melanogaster (Fruit fly) protein is Ductus ejaculatorius peptide 99B (Dup99B).